Consider the following 440-residue polypeptide: Probable exopolygalacturonase C (440 aa).

Positions 1 to 21 (MLITNPALLGILASLVPLALG) are cleaved as a signal peptide. N-linked (GlcNAc...) asparagine glycosylation is found at Asn-84 and Asn-151. PbH1 repeat units lie at residues 188–210 (GDDI…PFNT), 217–238 (GTNI…AVNT), and 240–261 (SHNI…SIGS). A glycan (N-linked (GlcNAc...) asparagine) is linked at Asn-219. Asp-231 functions as the Proton donor in the catalytic mechanism. The active site involves His-255. N-linked (GlcNAc...) asparagine glycosylation occurs at Asn-271. The PbH1 4 repeat unit spans residues 272–293 (ITNLRFEDVTVIDALYAARFKS). An N-linked (GlcNAc...) asparagine glycan is attached at Asn-313. Residues Cys-389 and Cys-395 are joined by a disulfide bond. An N-linked (GlcNAc...) asparagine glycan is attached at Asn-434.

It belongs to the glycosyl hydrolase 28 family.

Its subcellular location is the secreted. The catalysed reaction is [(1-&gt;4)-alpha-D-galacturonosyl](n) + H2O = alpha-D-galacturonate + [(1-&gt;4)-alpha-D-galacturonosyl](n-1). Functionally, specific in hydrolyzing the terminal glycosidic bond of polygalacturonic acid and oligogalacturonates. The polypeptide is Probable exopolygalacturonase C (pgxC) (Aspergillus fumigatus (strain CBS 144.89 / FGSC A1163 / CEA10) (Neosartorya fumigata)).